Here is a 393-residue protein sequence, read N- to C-terminus: MQQTKKLTHSDITIAVMSGPFLQRGEPALVSKWYRTKMALACGVDLVVELPYAFSTQKAETFANGAISILNALHVSEICFGSEDGQIENFYNTVSAQKNEEETFNRLVKQFMNAGNSYAKATSEAFLHILSSEKNIDMSQPNNILGFQYIKAILMQNSSMQAQTIKRFASHYHDETFNDQHIASATCIRKQLFSENSSFTEIESFIPKATASLLASYKQNYGTLHNWEQYFSFFKYKLMTMSPEDLRHIYEIEEGLEHRILSKIQTSSSFHLFMEALKTKRYTWTRLQRACTHILTNTTKEEIHCANIEQHAPYIRLLGMSQKGQTYLSKNKKKIELPILTHTKTFDHPTLHIERKANSVYFSIMKEPLRTQLLKRDATHHPIRYDETTAKFL.

Residues Gly-81, Asn-142, and Arg-167 each contribute to the ATP site.

This sequence belongs to the TmcAL family.

The protein localises to the cytoplasm. The enzyme catalyses cytidine(34) in elongator tRNA(Met) + acetate + ATP = N(4)-acetylcytidine(34) in elongator tRNA(Met) + AMP + diphosphate. Catalyzes the formation of N(4)-acetylcytidine (ac(4)C) at the wobble position of elongator tRNA(Met), using acetate and ATP as substrates. First activates an acetate ion to form acetyladenylate (Ac-AMP) and then transfers the acetyl group to tRNA to form ac(4)C34. This Bacillus cereus (strain 03BB102) protein is tRNA(Met) cytidine acetate ligase.